The sequence spans 438 residues: Anaerobic glycerol-3-phosphate dehydrogenase subunit B (438 aa).

It belongs to the anaerobic G-3-P dehydrogenase subunit B family. As to quaternary structure, composed of a catalytic GlpA/B dimer and of membrane bound GlpC. FMN is required as a cofactor.

It carries out the reaction a quinone + sn-glycerol 3-phosphate = dihydroxyacetone phosphate + a quinol. The protein operates within polyol metabolism; glycerol degradation via glycerol kinase pathway; glycerone phosphate from sn-glycerol 3-phosphate (anaerobic route): step 1/1. Its function is as follows. Conversion of glycerol 3-phosphate to dihydroxyacetone. Uses fumarate or nitrate as electron acceptor. This chain is Anaerobic glycerol-3-phosphate dehydrogenase subunit B, found in Vibrio vulnificus (strain CMCP6).